The following is a 160-amino-acid chain: Cyclic pyranopterin monophosphate synthase (160 aa).

Residues 77–79 (MCH) and 114–115 (ME) each bind substrate. Residue aspartate 129 is part of the active site.

It belongs to the MoaC family. As to quaternary structure, homohexamer; trimer of dimers.

The catalysed reaction is (8S)-3',8-cyclo-7,8-dihydroguanosine 5'-triphosphate = cyclic pyranopterin phosphate + diphosphate. Its pathway is cofactor biosynthesis; molybdopterin biosynthesis. Its function is as follows. Catalyzes the conversion of (8S)-3',8-cyclo-7,8-dihydroguanosine 5'-triphosphate to cyclic pyranopterin monophosphate (cPMP). This chain is Cyclic pyranopterin monophosphate synthase, found in Listeria monocytogenes serotype 4a (strain HCC23).